The sequence spans 626 residues: Threonine--tRNA ligase (626 aa).

Residues 1 to 144 (MRMLLIHADY…LSRTIVPEEG (144 aa)) are editing domain. Residues 207–506 (PHVRLMLEHE…QAQGKKPMFP (300 aa)) form a catalytic region. 3 residues coordinate Zn(2+): cysteine 299, histidine 351, and histidine 475.

Belongs to the class-II aminoacyl-tRNA synthetase family. As to quaternary structure, homodimer. Zn(2+) is required as a cofactor.

It localises to the cytoplasm. The catalysed reaction is tRNA(Thr) + L-threonine + ATP = L-threonyl-tRNA(Thr) + AMP + diphosphate + H(+). In terms of biological role, catalyzes the attachment of threonine to tRNA(Thr) in a two-step reaction: L-threonine is first activated by ATP to form Thr-AMP and then transferred to the acceptor end of tRNA(Thr). Also edits incorrectly charged L-seryl-tRNA(Thr). The polypeptide is Threonine--tRNA ligase (Thermococcus gammatolerans (strain DSM 15229 / JCM 11827 / EJ3)).